A 106-amino-acid chain; its full sequence is MANKIHVRKQDSVVVISGKDRGKIGEVLAVNPKKGTVLIKDVNVVVKHQKANKENMQGGLIKKEAPINSAKVMLYCTKCKTATRISKKVLDDGTKVRVCKKCGETF.

The protein belongs to the universal ribosomal protein uL24 family. In terms of assembly, part of the 50S ribosomal subunit.

Functionally, one of two assembly initiator proteins, it binds directly to the 5'-end of the 23S rRNA, where it nucleates assembly of the 50S subunit. Its function is as follows. One of the proteins that surrounds the polypeptide exit tunnel on the outside of the subunit. The polypeptide is Large ribosomal subunit protein uL24 (Clostridium acetobutylicum (strain ATCC 824 / DSM 792 / JCM 1419 / IAM 19013 / LMG 5710 / NBRC 13948 / NRRL B-527 / VKM B-1787 / 2291 / W)).